The chain runs to 515 residues: Maturase K (515 aa).

This sequence belongs to the intron maturase 2 family. MatK subfamily.

Its subcellular location is the plastid. It localises to the chloroplast. In terms of biological role, usually encoded in the trnK tRNA gene intron. Probably assists in splicing its own and other chloroplast group II introns. In Pinus yunnanensis (Yunnan pine), this protein is Maturase K.